The primary structure comprises 349 residues: Protein-glutamate methylesterase/protein-glutamine glutaminase (349 aa).

Residues 5–122 form the Response regulatory domain; it reads RVLCVDDSAL…REGMLAYSEL (118 aa). 4-aspartylphosphate is present on Asp56. One can recognise a CheB-type methylesterase domain in the interval 152–344; sequence LLSSEKLIAI…QRMLAQISSG (193 aa). Catalysis depends on residues Ser164, His190, and Asp286.

The protein belongs to the CheB family. Post-translationally, phosphorylated by CheA. Phosphorylation of the N-terminal regulatory domain activates the methylesterase activity.

The protein localises to the cytoplasm. It catalyses the reaction [protein]-L-glutamate 5-O-methyl ester + H2O = L-glutamyl-[protein] + methanol + H(+). It carries out the reaction L-glutaminyl-[protein] + H2O = L-glutamyl-[protein] + NH4(+). Functionally, involved in chemotaxis. Part of a chemotaxis signal transduction system that modulates chemotaxis in response to various stimuli. Catalyzes the demethylation of specific methylglutamate residues introduced into the chemoreceptors (methyl-accepting chemotaxis proteins or MCP) by CheR. Also mediates the irreversible deamidation of specific glutamine residues to glutamic acid. The chain is Protein-glutamate methylesterase/protein-glutamine glutaminase from Yersinia pseudotuberculosis serotype I (strain IP32953).